Here is a 306-residue protein sequence, read N- to C-terminus: Curved DNA-binding protein (306 aa).

Positions 5 to 69 (DYYAIMGVKP…QRRAEYDQMW (65 aa)) constitute a J domain.

Its subcellular location is the cytoplasm. It is found in the nucleoid. Its function is as follows. DNA-binding protein that preferentially recognizes a curved DNA sequence. It is probably a functional analog of DnaJ; displays overlapping activities with DnaJ, but functions under different conditions, probably acting as a molecular chaperone in an adaptive response to environmental stresses other than heat shock. Lacks autonomous chaperone activity; binds native substrates and targets them for recognition by DnaK. Its activity is inhibited by the binding of CbpM. The sequence is that of Curved DNA-binding protein from Shigella flexneri.